The chain runs to 443 residues: ATP-dependent protease ATPase subunit HslU (443 aa).

ATP-binding positions include isoleucine 18, 60 to 65 (GVGKTE), aspartate 256, glutamate 321, and arginine 393.

It belongs to the ClpX chaperone family. HslU subfamily. As to quaternary structure, a double ring-shaped homohexamer of HslV is capped on each side by a ring-shaped HslU homohexamer. The assembly of the HslU/HslV complex is dependent on binding of ATP.

Its subcellular location is the cytoplasm. Functionally, ATPase subunit of a proteasome-like degradation complex; this subunit has chaperone activity. The binding of ATP and its subsequent hydrolysis by HslU are essential for unfolding of protein substrates subsequently hydrolyzed by HslV. HslU recognizes the N-terminal part of its protein substrates and unfolds these before they are guided to HslV for hydrolysis. This Escherichia coli O17:K52:H18 (strain UMN026 / ExPEC) protein is ATP-dependent protease ATPase subunit HslU.